Here is an 870-residue protein sequence, read N- to C-terminus: Elastin (870 aa).

The signal sequence occupies residues 1-27; it reads MAGLTAAVPQPGVLLILLLNLLHPAQP. A 4-hydroxyproline mark is found at P39 and P75. Residue P87 is modified to Hydroxyproline. P105 is subject to 4-hydroxyproline. Allysine occurs at positions 122 and 126. P207, P220, P223, and P244 each carry 4-hydroxyproline. 2 positions are modified to allysine: K290 and K309. Residue P338 is modified to 4-hydroxyproline. Allysine is present on residues K360 and K363. Position 375 is a hydroxyproline (P375). 2 positions are modified to 4-hydroxyproline: P402 and P408. P413 and P418 each carry hydroxyproline. 5 positions are modified to allysine: K434, K438, K441, K485, and K488. P518 and P539 each carry 4-hydroxyproline. Allysine occurs at positions 554, 558, 615, 619, and 623. 4-hydroxyproline is present on residues P637, P646, P662, and P670. K677 and K680 each carry allysine. The residue at position 715 (P715) is a 4-hydroxyproline. Allysine is present on residues K730, K734, K793, and K796. P842 carries the post-translational modification 4-hydroxyproline. An intrachain disulfide couples C860 to C865.

This sequence belongs to the elastin family. In terms of assembly, the polymeric elastin chains are cross-linked together into an extensible 3D network. Forms a ternary complex with BGN and MFAP2. Interacts with MFAP2 via divalent cations (calcium &gt; magnesium &gt; manganese) in a dose-dependent and saturating manner. Interacts with FBLN5 and FBN1. Forms a ternary complex with FBN1 and FBLN2 or FBLN5. Interacts with MFAP4 in a Ca (2+)-dependent manner; this interaction promotes ELN self-assembly. Interacts with EFEMP2 with moderate affinity. Post-translationally, elastin is formed through the cross-linking of its soluble precursor tropoelastin. Cross-linking is initiated through the action of lysyl oxidase on exposed lysines to form allysine. Subsequent spontaneous condensation reactions with other allysine or unmodified lysine residues result in various bi-, tri-, and tetrafunctional cross-links. The most abundant cross-links in mature elastin fibers are lysinonorleucine, allysine aldol, desmosine, and isodesmosine. Hydroxylation on proline residues within the sequence motif, GXPG, is most likely to be 4-hydroxy as this fits the requirement for 4-hydroxylation in vertebrates.

The protein localises to the secreted. Its subcellular location is the extracellular space. The protein resides in the extracellular matrix. Functionally, major structural protein of tissues such as aorta and nuchal ligament, which must expand rapidly and recover completely. Molecular determinant of the late arterial morphogenesis, stabilizing arterial structure by regulating proliferation and organization of vascular smooth muscle. The chain is Elastin (Eln) from Rattus norvegicus (Rat).